The sequence spans 536 residues: Membrane protein insertase YidC (536 aa).

Helical transmembrane passes span 3–23 (LQRN…WKTW), 346–366 (ICGN…GITF), 417–437 (GGCF…YMLI), 454–474 (LSDQ…MFFI), and 494–514 (IPIL…LYYL).

It belongs to the OXA1/ALB3/YidC family. Type 1 subfamily. As to quaternary structure, interacts with the Sec translocase complex via SecD. Specifically interacts with transmembrane segments of nascent integral membrane proteins during membrane integration.

Its subcellular location is the cell membrane. Functionally, required for the insertion and/or proper folding and/or complex formation of integral membrane proteins into the membrane. Involved in integration of membrane proteins that insert both dependently and independently of the Sec translocase complex, as well as at least some lipoproteins. Aids folding of multispanning membrane proteins. This chain is Membrane protein insertase YidC, found in Buchnera aphidicola subsp. Baizongia pistaciae (strain Bp).